The following is a 249-amino-acid chain: 1-(5-phosphoribosyl)-5-[(5-phosphoribosylamino)methylideneamino] imidazole-4-carboxamide isomerase (249 aa).

Residue D8 is the Proton acceptor of the active site. The active-site Proton donor is the D129.

Belongs to the HisA/HisF family.

The protein localises to the cytoplasm. It carries out the reaction 1-(5-phospho-beta-D-ribosyl)-5-[(5-phospho-beta-D-ribosylamino)methylideneamino]imidazole-4-carboxamide = 5-[(5-phospho-1-deoxy-D-ribulos-1-ylimino)methylamino]-1-(5-phospho-beta-D-ribosyl)imidazole-4-carboxamide. It participates in amino-acid biosynthesis; L-histidine biosynthesis; L-histidine from 5-phospho-alpha-D-ribose 1-diphosphate: step 4/9. The chain is 1-(5-phosphoribosyl)-5-[(5-phosphoribosylamino)methylideneamino] imidazole-4-carboxamide isomerase from Magnetococcus marinus (strain ATCC BAA-1437 / JCM 17883 / MC-1).